The chain runs to 125 residues: Large ribosomal subunit protein uL22 (125 aa).

This sequence belongs to the universal ribosomal protein uL22 family. Part of the 50S ribosomal subunit.

This protein binds specifically to 23S rRNA; its binding is stimulated by other ribosomal proteins, e.g. L4, L17, and L20. It is important during the early stages of 50S assembly. It makes multiple contacts with different domains of the 23S rRNA in the assembled 50S subunit and ribosome. In terms of biological role, the globular domain of the protein is located near the polypeptide exit tunnel on the outside of the subunit, while an extended beta-hairpin is found that lines the wall of the exit tunnel in the center of the 70S ribosome. The protein is Large ribosomal subunit protein uL22 of Erythrobacter litoralis (strain HTCC2594).